The chain runs to 413 residues: Multifunctional CCA protein (413 aa).

Residues Gly8 and Arg11 each contribute to the ATP site. CTP contacts are provided by Gly8 and Arg11. Mg(2+) is bound by residues Asp21 and Asp23. ATP is bound by residues Arg91, Arg137, and Arg140. Residues Arg91, Arg137, and Arg140 each coordinate CTP. The 102-residue stretch at 228–329 (TGVHTLMTLS…VKLFDAIDAW (102 aa)) folds into the HD domain.

This sequence belongs to the tRNA nucleotidyltransferase/poly(A) polymerase family. Bacterial CCA-adding enzyme type 1 subfamily. Monomer. Can also form homodimers and oligomers. The cofactor is Mg(2+). Ni(2+) is required as a cofactor.

It catalyses the reaction a tRNA precursor + 2 CTP + ATP = a tRNA with a 3' CCA end + 3 diphosphate. The enzyme catalyses a tRNA with a 3' CCA end + 2 CTP + ATP = a tRNA with a 3' CCACCA end + 3 diphosphate. In terms of biological role, catalyzes the addition and repair of the essential 3'-terminal CCA sequence in tRNAs without using a nucleic acid template. Adds these three nucleotides in the order of C, C, and A to the tRNA nucleotide-73, using CTP and ATP as substrates and producing inorganic pyrophosphate. tRNA 3'-terminal CCA addition is required both for tRNA processing and repair. Also involved in tRNA surveillance by mediating tandem CCA addition to generate a CCACCA at the 3' terminus of unstable tRNAs. While stable tRNAs receive only 3'-terminal CCA, unstable tRNAs are marked with CCACCA and rapidly degraded. This Salmonella typhi protein is Multifunctional CCA protein.